Consider the following 245-residue polypeptide: tRNA1(Val) (adenine(37)-N6)-methyltransferase (245 aa).

This sequence belongs to the methyltransferase superfamily. tRNA (adenine-N(6)-)-methyltransferase family.

It is found in the cytoplasm. It carries out the reaction adenosine(37) in tRNA1(Val) + S-adenosyl-L-methionine = N(6)-methyladenosine(37) in tRNA1(Val) + S-adenosyl-L-homocysteine + H(+). In terms of biological role, specifically methylates the adenine in position 37 of tRNA(1)(Val) (anticodon cmo5UAC). This is tRNA1(Val) (adenine(37)-N6)-methyltransferase from Escherichia coli O6:K15:H31 (strain 536 / UPEC).